A 478-amino-acid chain; its full sequence is Putative response regulator NtrX-like (478 aa).

The region spanning 5–121 is the Response regulatory domain; it reads DVLIVDDEED…KLVILLKRAC (117 aa). The residue at position 54 (D54) is a 4-aspartylphosphate. The region spanning 143-372 is the Sigma-54 factor interaction domain; sequence LVGNSTITLK…LRNVVEWTLI (230 aa). ATP contacts are provided by residues 171-178 and 235-244; these read GKVGSGKE and ANNGTLYIDE.

Functionally, member of the two-component regulatory system RBE_0312/RBE_0470. This chain is Putative response regulator NtrX-like, found in Rickettsia bellii (strain RML369-C).